The primary structure comprises 445 residues: MSEFTQDTVQKPIDELVTWVKQYDFSLNLPTERLAFLLAIAVLSNERFDEELGEGELHDAFAIVTRLFAESGEASAFRANNAINDLVKQRLLSRFTSEMTEGASIYRLTPLAIGITDYYVRHREFSKLKLSIQLSMVADEMAKAVESAQQGGSVAHWRKNVFGVLKYSVSEIFDRIDLNQRVMDEQQQSVKEQIADLLNKDWRDAINNCEALLSETSATLRELQDTLQAAGDELQTQILDIQECVYGDLELDFIEETLSALQMKLDRITSWGQQSIDLWIGYDRHVHKFIRTAIDMDQNRAFSQRLRQSMNDYFEQPWYLTYADAERLSDLRDETLTLRDEEVTGHVPTEVEYEELQQVNDELAQRIGDMLKVHKEQGAAIDLALVLRDYLASHPRTHHFDLARMVVDQAVRLGYSESDYRAIQPDWTAINDFGAKVQANVIDRY.

Residues 213–241 (LSETSATLRELQDTLQAAGDELQTQILDI) form a leucine-zipper region.

It belongs to the MukF family. In terms of assembly, interacts, and probably forms a ternary complex, with MukE and MukB via its C-terminal region. The complex formation is stimulated by calcium or magnesium. It is required for an interaction between MukE and MukB.

Its subcellular location is the cytoplasm. It localises to the nucleoid. In terms of biological role, involved in chromosome condensation, segregation and cell cycle progression. May participate in facilitating chromosome segregation by condensation DNA from both sides of a centrally located replisome during cell division. Not required for mini-F plasmid partitioning. Probably acts via its interaction with MukB and MukE. Overexpression results in anucleate cells. It has a calcium binding activity. The protein is Chromosome partition protein MukF of Vibrio cholerae serotype O1 (strain ATCC 39315 / El Tor Inaba N16961).